We begin with the raw amino-acid sequence, 1503 residues long: Chromosome partition protein MukB (1503 aa).

Residues 1–19 show a composition bias toward polar residues; the sequence is MMNTNELFDQTAVNSSQDK. The segment at 1–21 is disordered; sequence MMNTNELFDQTAVNSSQDKPL. 65-72 is an ATP binding site; it reads GGNGAGKS. Coiled coils occupy residues 370 to 495, 536 to 616, 662 to 697, 865 to 1173, and 1238 to 1293; these read MNAL…QRLS, DQKM…HRQQ, MQEMLRKEREATLERDELARTEAALASQISQLSQAD, EMLM…SAEE, and DAIE…LQNI. The tract at residues 696-813 is flexible hinge; the sequence is ADGAEDIRLN…EVPLFGRAAR (118 aa).

Belongs to the SMC family. MukB subfamily. As to quaternary structure, homodimerization via its hinge domain. Binds to DNA via its C-terminal region. Interacts, and probably forms a ternary complex, with MukE and MukF via its C-terminal region. The complex formation is stimulated by calcium or magnesium. Interacts with tubulin-related protein FtsZ.

It is found in the cytoplasm. The protein localises to the nucleoid. Plays a central role in chromosome condensation, segregation and cell cycle progression. Functions as a homodimer, which is essential for chromosome partition. Involved in negative DNA supercoiling in vivo, and by this means organize and compact chromosomes. May achieve or facilitate chromosome segregation by condensation DNA from both sides of a centrally located replisome during cell division. This is Chromosome partition protein MukB from Haemophilus ducreyi (strain 35000HP / ATCC 700724).